A 231-amino-acid chain; its full sequence is Octanoyltransferase (231 aa).

One can recognise a BPL/LPL catalytic domain in the interval 49–227 (PHLPEAVWLL…ALAARFHLAW (179 aa)). Residues 91-98 (RGGEVTHH), 158-160 (AIG), and 171-173 (GLA) each bind substrate. Cys-189 functions as the Acyl-thioester intermediate in the catalytic mechanism.

This sequence belongs to the LipB family.

It is found in the cytoplasm. The enzyme catalyses octanoyl-[ACP] + L-lysyl-[protein] = N(6)-octanoyl-L-lysyl-[protein] + holo-[ACP] + H(+). The protein operates within protein modification; protein lipoylation via endogenous pathway; protein N(6)-(lipoyl)lysine from octanoyl-[acyl-carrier-protein]: step 1/2. In terms of biological role, catalyzes the transfer of endogenously produced octanoic acid from octanoyl-acyl-carrier-protein onto the lipoyl domains of lipoate-dependent enzymes. Lipoyl-ACP can also act as a substrate although octanoyl-ACP is likely to be the physiological substrate. This Parasynechococcus marenigrum (strain WH8102) protein is Octanoyltransferase.